A 385-amino-acid polypeptide reads, in one-letter code: Cytochrome b (385 aa).

4 consecutive transmembrane segments (helical) span residues 32 to 52 (FGSL…TLAM), 76 to 98 (WLVR…LHIG), 113 to 133 (TWAI…LGYV), and 179 to 199 (FFAL…MHLI). Residues His82 and His96 each contribute to the heme b site. 2 residues coordinate heme b: His183 and His197. Residue His202 coordinates a ubiquinone. Helical transmembrane passes span 226–246 (FVFK…IFVF), 290–310 (LLGV…PITD), 322–342 (LSKV…QIGA), and 349–369 (FIEF…VIVP).

This sequence belongs to the cytochrome b family. In terms of assembly, fungal cytochrome b-c1 complex contains 10 subunits; 3 respiratory subunits, 2 core proteins and 5 low-molecular weight proteins. Cytochrome b-c1 complex is a homodimer. Heme b is required as a cofactor.

The protein localises to the mitochondrion inner membrane. In terms of biological role, component of the ubiquinol-cytochrome c reductase complex (complex III or cytochrome b-c1 complex) that is part of the mitochondrial respiratory chain. The b-c1 complex mediates electron transfer from ubiquinol to cytochrome c. Contributes to the generation of a proton gradient across the mitochondrial membrane that is then used for ATP synthesis. This chain is Cytochrome b (cob), found in Aspergillus terreus (strain NIH 2624 / FGSC A1156).